A 269-amino-acid polypeptide reads, in one-letter code: Achromobactin transport ATP-binding protein CbrD (269 aa).

Residues 4 to 240 (ITSRELTLGY…ALVKTVFNLD (237 aa)) form the ABC transporter domain. 36–43 (GSNGCGKS) lines the ATP pocket.

Belongs to the ABC transporter superfamily.

It localises to the cell inner membrane. Part of the binding-protein-dependent transport system CbrABCD for uptake of the siderophore achromobactin. Probably responsible for energy coupling to the transport system. The chain is Achromobactin transport ATP-binding protein CbrD (cbrD) from Dickeya dadantii (strain 3937) (Erwinia chrysanthemi (strain 3937)).